A 461-amino-acid polypeptide reads, in one-letter code: Phosphoglycerate kinase, chloroplastic (461 aa).

The transit peptide at 1–60 (MALSMKMRANARVSGRRVAAVAPRVVPFSSASSSVLRSGFALRCLWTSAAWAALASVVEA) directs the protein to the chloroplast. (2R)-3-phosphoglycerate-binding residues include Ala-82, Asp-83, Asn-85, Arg-100, Ser-122, His-123, Gly-125, Arg-126, Arg-182, His-214, and Arg-215. Gly-260 is an ADP binding site. Gly-260 lines the CDP pocket. Residues Lys-262 and Lys-266 each coordinate AMP. Residue Lys-266 coordinates ATP. ADP is bound at residue Gly-284. Residue Gly-284 participates in CDP binding. The AMP site is built by Gly-285 and Gly-357. ATP-binding residues include Gly-285 and Gly-357. CDP is bound by residues Gly-382 and Phe-387. Phe-387 contacts ADP. Glu-388 contacts AMP. ATP is bound by residues Glu-388, Asp-419, and Ser-420. Asp-419 serves as a coordination point for Mg(2+).

The protein belongs to the phosphoglycerate kinase family. As to quaternary structure, monomer. Mg(2+) serves as cofactor.

It is found in the plastid. It localises to the chloroplast. It catalyses the reaction (2R)-3-phosphoglycerate + ATP = (2R)-3-phospho-glyceroyl phosphate + ADP. It functions in the pathway carbohydrate biosynthesis; Calvin cycle. This Chlamydomonas reinhardtii (Chlamydomonas smithii) protein is Phosphoglycerate kinase, chloroplastic.